The sequence spans 270 residues: 4-hydroxy-tetrahydrodipicolinate reductase (270 aa).

Residues 11-16 (GCNGRM) and Glu-37 contribute to the NAD(+) site. An NADP(+)-binding site is contributed by Arg-38. NAD(+)-binding positions include 101-103 (GTT) and 125-128 (ASNY). Residue His-158 is the Proton donor/acceptor of the active site. His-159 provides a ligand contact to (S)-2,3,4,5-tetrahydrodipicolinate. Residue Lys-162 is the Proton donor of the active site. 168-169 (GT) contributes to the (S)-2,3,4,5-tetrahydrodipicolinate binding site.

This sequence belongs to the DapB family.

It is found in the cytoplasm. It catalyses the reaction (S)-2,3,4,5-tetrahydrodipicolinate + NAD(+) + H2O = (2S,4S)-4-hydroxy-2,3,4,5-tetrahydrodipicolinate + NADH + H(+). It carries out the reaction (S)-2,3,4,5-tetrahydrodipicolinate + NADP(+) + H2O = (2S,4S)-4-hydroxy-2,3,4,5-tetrahydrodipicolinate + NADPH + H(+). The protein operates within amino-acid biosynthesis; L-lysine biosynthesis via DAP pathway; (S)-tetrahydrodipicolinate from L-aspartate: step 4/4. Its function is as follows. Catalyzes the conversion of 4-hydroxy-tetrahydrodipicolinate (HTPA) to tetrahydrodipicolinate. This chain is 4-hydroxy-tetrahydrodipicolinate reductase, found in Aeromonas salmonicida (strain A449).